Reading from the N-terminus, the 392-residue chain is Homoserine O-acetyltransferase (392 aa).

The 305-residue stretch at 52 to 356 (NVVVVLHALT…ICGHDGFLVE (305 aa)) folds into the AB hydrolase-1 domain. Catalysis depends on serine 157, which acts as the Nucleophile. Arginine 227 lines the substrate pocket. Residues aspartate 320 and histidine 350 contribute to the active site. Substrate is bound at residue aspartate 351. A disordered region spans residues 373–392 (SQSAGPGGAGPGSRKGTTRR).

Belongs to the AB hydrolase superfamily. MetX family. In terms of assembly, homodimer.

It is found in the cytoplasm. The enzyme catalyses L-homoserine + acetyl-CoA = O-acetyl-L-homoserine + CoA. The protein operates within amino-acid biosynthesis; L-methionine biosynthesis via de novo pathway; O-acetyl-L-homoserine from L-homoserine: step 1/1. Transfers an acetyl group from acetyl-CoA to L-homoserine, forming acetyl-L-homoserine. In Mycobacterium avium (strain 104), this protein is Homoserine O-acetyltransferase.